The primary structure comprises 233 residues: Small ribosomal subunit protein uS3 (233 aa).

One can recognise a KH type-2 domain in the interval 39–107 (VRQFLMKTLE…PVQINISEVR (69 aa)).

It belongs to the universal ribosomal protein uS3 family. As to quaternary structure, part of the 30S ribosomal subunit. Forms a tight complex with proteins S10 and S14.

Functionally, binds the lower part of the 30S subunit head. Binds mRNA in the 70S ribosome, positioning it for translation. The sequence is that of Small ribosomal subunit protein uS3 from Buchnera aphidicola subsp. Acyrthosiphon pisum (strain APS) (Acyrthosiphon pisum symbiotic bacterium).